A 156-amino-acid chain; its full sequence is Cyanate hydratase (156 aa).

Catalysis depends on residues Arg96, Glu99, and Ser122.

This sequence belongs to the cyanase family.

It catalyses the reaction cyanate + hydrogencarbonate + 3 H(+) = NH4(+) + 2 CO2. In terms of biological role, catalyzes the reaction of cyanate with bicarbonate to produce ammonia and carbon dioxide. The polypeptide is Cyanate hydratase (Burkholderia mallei (strain NCTC 10247)).